The sequence spans 369 residues: Cytokine receptor common subunit gamma (369 aa).

An N-terminal signal peptide occupies residues 1–22; the sequence is MLKPSLPFTSLLFLQLPLLGVG. Residues 23–262 are Extracellular-facing; the sequence is LNTTILTPNG…ENPFLFALEA (240 aa). N-linked (GlcNAc...) asparagine glycans are attached at residues Asn24, Asn71, Asn75, and Asn84. A disulfide bridge links Cys62 with Cys72. A disulfide bond links Cys102 and Cys115. The region spanning 156 to 253 is the Fibronectin type-III domain; that stretch reads APENLTLHKL…IHWGSNTSKE (98 aa). Asn159 carries N-linked (GlcNAc...) asparagine glycosylation. Cys182 and Cys231 are oxidised to a cystine. Positions 237–241 match the WSXWS motif motif; that stretch reads WSEWS. A glycan (N-linked (GlcNAc...) asparagine) is linked at Asn249. The helical transmembrane segment at 263–283 threads the bilayer; sequence VVISVGSMGLIISLLCVYFWL. The Cytoplasmic segment spans residues 284–369; the sequence is ERTMPRIPTL…PPCYTLKPET (86 aa). A Box 1 motif motif is present at residues 286 to 294; sequence TMPRIPTLK. The residue at position 292 (Thr292) is a Phosphothreonine.

This sequence belongs to the type I cytokine receptor family. Type 5 subfamily. As to quaternary structure, the gamma subunit is common to the IL2, IL4, IL7, IL15, IL21 and probably also the IL13 receptors. Interacts with SHB upon interleukin stimulation. Interacts with IL9. In terms of assembly, (Microbial infection) Interacts with HTLV-1 accessory protein p12I.

It is found in the cell membrane. The protein localises to the cell surface. In terms of biological role, common subunit for the receptors for a variety of interleukins. Probably in association with IL15RA, involved in the stimulation of neutrophil phagocytosis by IL15. This is Cytokine receptor common subunit gamma (IL2RG) from Homo sapiens (Human).